Reading from the N-terminus, the 270-residue chain is Pre-mRNA-splicing factor CWC23 (270 aa).

A J domain is found at 12-84 (DLYRILHIHV…EHKKEYDIWY (73 aa)).

This sequence belongs to the DnaJ family. Associated with the spliceosome.

Its subcellular location is the cytoplasm. The protein resides in the nucleus. Its function is as follows. Involved in pre-mRNA splicing. May be involved in endoplasmic reticulum-associated protein degradation (ERAD) and required for growth at low and high temperatures. In Kluyveromyces lactis (strain ATCC 8585 / CBS 2359 / DSM 70799 / NBRC 1267 / NRRL Y-1140 / WM37) (Yeast), this protein is Pre-mRNA-splicing factor CWC23 (CWC23).